The following is a 132-amino-acid chain: UPF0146 protein PF0123 (132 aa).

This sequence belongs to the UPF0146 family.

This Pyrococcus furiosus (strain ATCC 43587 / DSM 3638 / JCM 8422 / Vc1) protein is UPF0146 protein PF0123.